Consider the following 249-residue polypeptide: Isoprenyl transferase (249 aa).

Asp-25 is an active-site residue. Asp-25 lines the Mg(2+) pocket. Substrate contacts are provided by residues 26-29, Trp-30, Arg-38, His-42, and 70-72; these read GNGR and STE. Catalysis depends on Asn-73, which acts as the Proton acceptor. Residues Trp-74, Arg-76, Arg-197, and 203-205 contribute to the substrate site; that span reads RLS. Residue Glu-216 participates in Mg(2+) binding.

The protein belongs to the UPP synthase family. In terms of assembly, homodimer. The cofactor is Mg(2+).

Its function is as follows. Catalyzes the condensation of isopentenyl diphosphate (IPP) with allylic pyrophosphates generating different type of terpenoids. This is Isoprenyl transferase from Streptococcus pyogenes serotype M1.